The sequence spans 380 residues: 1-deoxy-D-xylulose 5-phosphate reductoisomerase 2 (380 aa).

The NADPH site is built by S10, G11, S12, I13, G36, K37, N38, and N120. K121 contacts 1-deoxy-D-xylulose 5-phosphate. E122 is an NADPH binding site. Mn(2+) is bound at residue D146. The 1-deoxy-D-xylulose 5-phosphate site is built by S147, E148, S172, and H195. E148 provides a ligand contact to Mn(2+). G201 contributes to the NADPH binding site. 1-deoxy-D-xylulose 5-phosphate contacts are provided by S208, N213, K214, and E217. Residue E217 participates in Mn(2+) binding.

It belongs to the DXR family. Mg(2+) is required as a cofactor. Requires Mn(2+) as cofactor.

It catalyses the reaction 2-C-methyl-D-erythritol 4-phosphate + NADP(+) = 1-deoxy-D-xylulose 5-phosphate + NADPH + H(+). It participates in isoprenoid biosynthesis; isopentenyl diphosphate biosynthesis via DXP pathway; isopentenyl diphosphate from 1-deoxy-D-xylulose 5-phosphate: step 1/6. Its function is as follows. Catalyzes the NADPH-dependent rearrangement and reduction of 1-deoxy-D-xylulose-5-phosphate (DXP) to 2-C-methyl-D-erythritol 4-phosphate (MEP). The protein is 1-deoxy-D-xylulose 5-phosphate reductoisomerase 2 of Bacillus anthracis.